The chain runs to 439 residues: Gnt-II system L-idonate transporter (439 aa).

Topologically, residues 1–11 are periplasmic; the sequence is MPLIIIAAGVA. The helical transmembrane segment at 12 to 34 threads the bilayer; the sequence is LLLILMIGFKVNGFIALVLVAAV. Residues 35–53 are Cytoplasmic-facing; the sequence is VGFAEGMDAQAVLHSIQNG. A helical membrane pass occupies residues 54 to 76; the sequence is IGSTLGGLAMILGFGAMLGKLIS. The Periplasmic segment spans residues 77-96; the sequence is DTGAAQRIATTLIATFGKKR. The helical transmembrane segment at 97-114 threads the bilayer; the sequence is VQWALVITGLVVGLAMFF. Over 115-118 the chain is Cytoplasmic; it reads EVGF. The helical transmembrane segment at 119 to 141 threads the bilayer; the sequence is VLLLPLVFTIVASSGLPLLYVGV. Topologically, residues 142–170 are periplasmic; that stretch reads PMVAALSVTHCFLPPHPGPTAIATIFEAN. Residues 171–193 form a helical membrane-spanning segment; it reads LGTTLLYGFIITIPTVIVAGPLF. Residues 194-218 lie on the Cytoplasmic side of the membrane; that stretch reads SKLLTRFEKAPPEGLFNPHLFSEEE. A helical transmembrane segment spans residues 219–241; it reads MPSFWNSIFAAVIPVILMAIAAV. Residues 242–253 are Periplasmic-facing; that stretch reads CEITLPKTNTVR. The helical transmembrane segment at 254-276 threads the bilayer; it reads LFFEFVGNPAVALFIAIVIAIFT. Residues 277 to 290 lie on the Cytoplasmic side of the membrane; it reads LGRRNGRTIEQIMD. Residues 291–310 form a helical membrane-spanning segment; that stretch reads IIGDSIGAIAMIVFIIAGGG. The Periplasmic segment spans residues 311–322; that stretch reads AFKQVLVDSGVG. The chain crosses the membrane as a helical span at residues 323–345; sequence HYISHLMTGTTLSPLLMCWTVAA. The Cytoplasmic segment spans residues 346-348; sequence LLR. Residues 349–371 form a helical membrane-spanning segment; the sequence is IALGSATVAAITTAGVVLPIINV. Residues 372–377 are Periplasmic-facing; sequence THADPA. A helical transmembrane segment spans residues 378 to 400; that stretch reads LMVLATGAGSVIASHVNDPGFWL. Residues 401–414 lie on the Cytoplasmic side of the membrane; sequence FKGYFNLTVGETLR. Residues 415–437 form a helical membrane-spanning segment; it reads TWTVMETLISIMGLLGVLAINAV. Residues 438 to 439 lie on the Periplasmic side of the membrane; sequence LH.

The protein belongs to the GntP permease family.

The protein resides in the cell inner membrane. The enzyme catalyses L-idonate(in) + H(+)(in) = L-idonate(out) + H(+)(out). It carries out the reaction D-gluconate(in) + H(+)(in) = D-gluconate(out) + H(+)(out). It catalyses the reaction 5-dehydro-D-gluconate(in) + H(+)(in) = 5-dehydro-D-gluconate(out) + H(+)(out). The protein operates within carbohydrate acid metabolism; L-idonate degradation. Its function is as follows. Transporter which is probably involved in L-idonate metabolism. Transports L-idonate from the periplasm across the inner membrane. Can also transport D-gluconate and 5-keto-D-gluconate. It has been reported that gluconate uptake probably occurs via a proton-symport mechanism in E.coli. This is Gnt-II system L-idonate transporter from Escherichia coli (strain K12).